The sequence spans 601 residues: Glutathione-regulated potassium-efflux system protein KefB (601 aa).

Transmembrane regions (helical) follow at residues 4–24 (SDFL…VPLA), 29–49 (IGAV…GLGF), 55–75 (EILH…GLEL), 87–107 (IFGV…GLLM), 115–135 (AAVV…LQLM), 152–172 (VLLF…LLAG), 177–197 (HFDW…LIGG), 207–227 (FIAA…LVLG), 230–250 (LFMD…GVLL), 268–288 (GLLL…GVLY), 291–311 (LLWV…VLYL), 324–344 (MQFA…FSTA), and 356–376 (ALLL…MKLV). An RCK N-terminal domain is found at 400 to 519 (KPQVIVVGFG…AGVTQFSRET (120 aa)).

The protein belongs to the monovalent cation:proton antiporter 2 (CPA2) transporter (TC 2.A.37) family. KefB subfamily. In terms of assembly, interacts with the regulatory subunit KefG.

The protein localises to the cell inner membrane. Pore-forming subunit of a potassium efflux system that confers protection against electrophiles. Catalyzes K(+)/H(+) antiport. The protein is Glutathione-regulated potassium-efflux system protein KefB of Escherichia coli (strain ATCC 8739 / DSM 1576 / NBRC 3972 / NCIMB 8545 / WDCM 00012 / Crooks).